Here is a 272-residue protein sequence, read N- to C-terminus: 3-methyl-2-oxobutanoate hydroxymethyltransferase (272 aa).

Residues D42 and D86 each contribute to the Mg(2+) site. 3-methyl-2-oxobutanoate-binding positions include 42 to 43 (DS), D86, and K116. E118 lines the Mg(2+) pocket. E185 serves as the catalytic Proton acceptor. The disordered stretch occupies residues 251-272 (LKEQRDQRATPTTPPPPPAPDC). Positions 262–272 (TTPPPPPAPDC) are enriched in pro residues.

Belongs to the PanB family. In terms of assembly, homodecamer; pentamer of dimers. Mg(2+) serves as cofactor.

The protein localises to the cytoplasm. The catalysed reaction is 3-methyl-2-oxobutanoate + (6R)-5,10-methylene-5,6,7,8-tetrahydrofolate + H2O = 2-dehydropantoate + (6S)-5,6,7,8-tetrahydrofolate. It functions in the pathway cofactor biosynthesis; (R)-pantothenate biosynthesis; (R)-pantoate from 3-methyl-2-oxobutanoate: step 1/2. Catalyzes the reversible reaction in which hydroxymethyl group from 5,10-methylenetetrahydrofolate is transferred onto alpha-ketoisovalerate to form ketopantoate. This is 3-methyl-2-oxobutanoate hydroxymethyltransferase from Synechococcus sp. (strain CC9311).